We begin with the raw amino-acid sequence, 130 residues long: uncharacterized protein (130 aa).

This is an uncharacterized protein from Aedes vexans (Inland floodwater mosquito).